A 298-amino-acid chain; its full sequence is N-acetylmuramic acid 6-phosphate etherase (298 aa).

The SIS domain occupies 55-218 (ITESLRRGGR…STASMVRLGK (164 aa)). Glu-83 acts as the Proton donor in catalysis. Residue Glu-114 is part of the active site.

The protein belongs to the GCKR-like family. MurNAc-6-P etherase subfamily. In terms of assembly, homodimer.

The catalysed reaction is N-acetyl-D-muramate 6-phosphate + H2O = N-acetyl-D-glucosamine 6-phosphate + (R)-lactate. It functions in the pathway amino-sugar metabolism; N-acetylmuramate degradation. Specifically catalyzes the cleavage of the D-lactyl ether substituent of MurNAc 6-phosphate, producing GlcNAc 6-phosphate and D-lactate. The protein is N-acetylmuramic acid 6-phosphate etherase of Mycolicibacterium smegmatis (strain ATCC 700084 / mc(2)155) (Mycobacterium smegmatis).